The primary structure comprises 397 residues: Teichoic acid D-alanine hydrolase (397 aa).

A signal peptide spans 1–27 (MKFNKEKLVIHACVLLFIIISIGLVFH).

The protein resides in the cell membrane. It carries out the reaction [(4-D-Ala)-(2-GlcNAc)-Rib-ol-P]n-[Gro-P]m-beta-D-ManNAc-(1-&gt;4)-alpha-D-GlcNAc-P-peptidoglycan + n H2O = [(2-GlcNAc)-Rib-ol-P]n-[Gro-P]m-beta-D-ManNAc-(1-&gt;4)-alpha-D-GlcNAc-P-peptidoglycan + n D-alanine.. Its function is as follows. Catalyzes the liberation of D-alanyl moieties present on wall teichoic acid (WTA) and lipoteichoic acid (LTA). Affects the methicillin resistance level and autolysis in the presence of Triton X-100 as well as the cell wall structure. In Staphylococcus aureus (strain MRSA252), this protein is Teichoic acid D-alanine hydrolase (fmtA).